A 333-amino-acid chain; its full sequence is 4-hydroxy-3-methylbut-2-enyl diphosphate reductase (333 aa).

Cysteine 34 serves as a coordination point for [4Fe-4S] cluster. Positions 63 and 96 each coordinate (2E)-4-hydroxy-3-methylbut-2-enyl diphosphate. Dimethylallyl diphosphate-binding residues include histidine 63 and histidine 96. Residues histidine 63 and histidine 96 each contribute to the isopentenyl diphosphate site. Cysteine 118 contributes to the [4Fe-4S] cluster binding site. Position 146 (histidine 146) interacts with (2E)-4-hydroxy-3-methylbut-2-enyl diphosphate. Residue histidine 146 participates in dimethylallyl diphosphate binding. Histidine 146 serves as a coordination point for isopentenyl diphosphate. Residue glutamate 148 is the Proton donor of the active site. Threonine 186 is a (2E)-4-hydroxy-3-methylbut-2-enyl diphosphate binding site. Cysteine 216 contributes to the [4Fe-4S] cluster binding site. (2E)-4-hydroxy-3-methylbut-2-enyl diphosphate-binding residues include serine 244, serine 245, asparagine 246, and serine 289. Residues serine 244, serine 245, asparagine 246, and serine 289 each coordinate dimethylallyl diphosphate. Isopentenyl diphosphate contacts are provided by serine 244, serine 245, asparagine 246, and serine 289.

This sequence belongs to the IspH family. It depends on [4Fe-4S] cluster as a cofactor.

The enzyme catalyses isopentenyl diphosphate + 2 oxidized [2Fe-2S]-[ferredoxin] + H2O = (2E)-4-hydroxy-3-methylbut-2-enyl diphosphate + 2 reduced [2Fe-2S]-[ferredoxin] + 2 H(+). It catalyses the reaction dimethylallyl diphosphate + 2 oxidized [2Fe-2S]-[ferredoxin] + H2O = (2E)-4-hydroxy-3-methylbut-2-enyl diphosphate + 2 reduced [2Fe-2S]-[ferredoxin] + 2 H(+). Its pathway is isoprenoid biosynthesis; dimethylallyl diphosphate biosynthesis; dimethylallyl diphosphate from (2E)-4-hydroxy-3-methylbutenyl diphosphate: step 1/1. The protein operates within isoprenoid biosynthesis; isopentenyl diphosphate biosynthesis via DXP pathway; isopentenyl diphosphate from 1-deoxy-D-xylulose 5-phosphate: step 6/6. Catalyzes the conversion of 1-hydroxy-2-methyl-2-(E)-butenyl 4-diphosphate (HMBPP) into a mixture of isopentenyl diphosphate (IPP) and dimethylallyl diphosphate (DMAPP). Acts in the terminal step of the DOXP/MEP pathway for isoprenoid precursor biosynthesis. This Mycolicibacterium gilvum (strain PYR-GCK) (Mycobacterium gilvum (strain PYR-GCK)) protein is 4-hydroxy-3-methylbut-2-enyl diphosphate reductase.